Reading from the N-terminus, the 226-residue chain is Small ribosomal subunit protein uS3 (226 aa).

Residues 36-104 (IRKYLENRLS…KIQINIFEIK (69 aa)) form the KH type-2 domain.

This sequence belongs to the universal ribosomal protein uS3 family. As to quaternary structure, part of the 30S ribosomal subunit. Forms a tight complex with proteins S10 and S14.

Functionally, binds the lower part of the 30S subunit head. Binds mRNA in the 70S ribosome, positioning it for translation. This Karelsulcia muelleri (strain GWSS) (Sulcia muelleri) protein is Small ribosomal subunit protein uS3.